Here is a 391-residue protein sequence, read N- to C-terminus: MEQAILRINNISSQLTGKCPFKAHGGGAGKCPYKLGGGQILDQSKAWSLVNVTANVDQVTPIKVLVTGAAGQIAYSLMFMIASGQMFGPHQPVILHLLDIPKMADALKGVVMELQDCSYPLLQSVVATTDIQTAFLHINVAILVGAFPRGPGMQRKDLLKVNVSIFKEQGEALNKYASRGVKVLVVGNPANTNALTALMKASDLPTSNFSALTRLDQNRAQSMISEKVGTNVDNVHNVIIWGNHSQTQVPDVNHGYILNYPNRGLIEPIPSSVNDDKWLNEQFIPLVQNRGATVIAARKLSSAASAANAIVGHVRDWLLGTKDGEHVSMAVYSDGSYNVPKGLIFSFPVTCHNGQWTIVQGLKINSSTQQKIDATIKELQEEKETAMSFLN.

Residue 68–74 coordinates NAD(+); the sequence is GAAGQIA. The substrate site is built by Arg-149 and Arg-155. NAD(+) is bound by residues Asn-162, Gln-169, and 186–188; that span reads VGN. 2 residues coordinate substrate: Asn-188 and Arg-219. His-244 functions as the Proton acceptor in the catalytic mechanism.

Belongs to the LDH/MDH superfamily. MDH type 2 family. As to quaternary structure, homodimer.

It carries out the reaction (S)-malate + NAD(+) = oxaloacetate + NADH + H(+). In terms of biological role, catalyzes the reversible oxidation of malate to oxaloacetate. This Dictyostelium discoideum (Social amoeba) protein is Probable malate dehydrogenase 1 (mdhA).